A 261-amino-acid chain; its full sequence is Type III pantothenate kinase (261 aa).

Position 6–13 (6–13) interacts with ATP; sequence DAGNTNVV. Substrate is bound at residue 108-111; it reads GADR. The Proton acceptor role is filled by D110. A K(+)-binding site is contributed by D130. T133 contributes to the ATP binding site. T185 contacts substrate.

This sequence belongs to the type III pantothenate kinase family. Homodimer. It depends on NH4(+) as a cofactor. Requires K(+) as cofactor.

The protein resides in the cytoplasm. It catalyses the reaction (R)-pantothenate + ATP = (R)-4'-phosphopantothenate + ADP + H(+). The protein operates within cofactor biosynthesis; coenzyme A biosynthesis; CoA from (R)-pantothenate: step 1/5. In terms of biological role, catalyzes the phosphorylation of pantothenate (Pan), the first step in CoA biosynthesis. This Rhodospirillum centenum (strain ATCC 51521 / SW) protein is Type III pantothenate kinase.